The chain runs to 302 residues: N-acetyl-D-glucosamine kinase (302 aa).

ATP is bound by residues 4–11 (GFDVGGTK) and 133–140 (GFGGGLVY). The Zn(2+) site is built by His-157, Cys-177, Cys-179, and Cys-184.

Belongs to the ROK (NagC/XylR) family. NagK subfamily.

The catalysed reaction is N-acetyl-D-glucosamine + ATP = N-acetyl-D-glucosamine 6-phosphate + ADP + H(+). It participates in cell wall biogenesis; peptidoglycan recycling. Its function is as follows. Catalyzes the phosphorylation of N-acetyl-D-glucosamine (GlcNAc) derived from cell-wall degradation, yielding GlcNAc-6-P. This is N-acetyl-D-glucosamine kinase from Vibrio atlanticus (strain LGP32) (Vibrio splendidus (strain Mel32)).